Consider the following 416-residue polypeptide: MASSSGSSPRPAPDENEFPFGCPPTVCQDPKEPRALCCAGCLSENPRNGEDQICPKCRGEDLQSISPGSRLRTQEKAHPEVAEAGIGCPFAGVGCSFKGSPQSVQEHEVTSQTSHLNLLLGFMKQWKARLGCGLESGPMALEQNLSDLQLQAAVEVAGDLEVDCYRAPCSESQEELALQHFMKEKLLAELEGKLRVFENIVAVLNKEVEASHLALATSIHQSQLDRERILSLEQRVVELQQTLAQKDQALGKLEQSLRLMEEASFDGTFLWKITNVTRRCHESACGRTVSLFSPAFYTAKYGYKLCLRLYLNGDGTGKRTHLSLFIVIMRGEYDALLPWPFRNKVTFMLLDQNNREHAIDAFRPDLSSASFQRPQSETNVASGCPLFFPLSKLQSPKHAYVKDDTMFLKCIVETST.

A disordered region spans residues 1 to 24; it reads MASSSGSSPRPAPDENEFPFGCPP. At serine 146 the chain carries Phosphoserine. Residues 182 to 264 are a coiled coil; sequence MKEKLLAELE…QSLRLMEEAS (83 aa). Residues lysine 185 and lysine 193 each participate in a glycyl lysine isopeptide (Lys-Gly) (interchain with G-Cter in ubiquitin) cross-link. Residues 266-412 enclose the MATH domain; that stretch reads DGTFLWKITN…DDTMFLKCIV (147 aa).

Homotrimer. Heterotrimer with TRAF2. Interacts with TNFRSF1A/TNFR1, TNFRSF1B/TNFR2, TNFRSF4, TNFRSF5/CD40, TNFRSF8/CD30, TNFRSF9/CD137, TNFRSF11A/RANK, TNFRSF13C, TNFRSF18/AITR, TNFRSF17/BCMA, TNFRSF19/TROY, TNFRSF19L/RELT, XEDAR, EDAR, Epstein-Barr virus BNFL1/LMP-1, TANK/ITRAF, TRAIP and RIPK2. Interacts with BIRC2 and BIRC3 N-terminus; a single BIRC2 or BIRC3 molecule interacts with a heterotrimer formed by TRAF1 and TRAF2. Interacts with NFATC2IP, TRAFD1 and with HIVEP3. Interacts with MAP3K14. Interacts with GPS2. Post-translationally, polyubiquitinated by BIRC2 and/or BIRC3, leading to its subsequent proteasomal degradation. Ubiquitinated by the SCF(FBXL2) complex, leading to its degradation by the proteasome.

In terms of biological role, adapter molecule that regulates the activation of NF-kappa-B and JNK. Plays a role in the regulation of cell survival and apoptosis. The heterotrimer formed by TRAF1 and TRAF2 is part of a E3 ubiquitin-protein ligase complex that promotes ubiquitination of target proteins, such as MAP3K14. The TRAF1/TRAF2 complex recruits the antiapoptotic E3 protein-ubiquitin ligases BIRC2 and BIRC3 to TNFRSF1B/TNFR2. This Homo sapiens (Human) protein is TNF receptor-associated factor 1 (TRAF1).